The chain runs to 253 residues: 1-(5-phosphoribosyl)-5-[(5-phosphoribosylamino)methylideneamino] imidazole-4-carboxamide isomerase (253 aa).

Catalysis depends on aspartate 19, which acts as the Proton acceptor. Aspartate 141 serves as the catalytic Proton donor.

Belongs to the HisA/HisF family.

It is found in the cytoplasm. It catalyses the reaction 1-(5-phospho-beta-D-ribosyl)-5-[(5-phospho-beta-D-ribosylamino)methylideneamino]imidazole-4-carboxamide = 5-[(5-phospho-1-deoxy-D-ribulos-1-ylimino)methylamino]-1-(5-phospho-beta-D-ribosyl)imidazole-4-carboxamide. Its pathway is amino-acid biosynthesis; L-histidine biosynthesis; L-histidine from 5-phospho-alpha-D-ribose 1-diphosphate: step 4/9. This Rhodopirellula baltica (strain DSM 10527 / NCIMB 13988 / SH1) protein is 1-(5-phosphoribosyl)-5-[(5-phosphoribosylamino)methylideneamino] imidazole-4-carboxamide isomerase.